A 98-amino-acid polypeptide reads, in one-letter code: Co-chaperonin GroES (98 aa).

Belongs to the GroES chaperonin family. In terms of assembly, heptamer of 7 subunits arranged in a ring. Interacts with the chaperonin GroEL.

It localises to the cytoplasm. Its function is as follows. Together with the chaperonin GroEL, plays an essential role in assisting protein folding. The GroEL-GroES system forms a nano-cage that allows encapsulation of the non-native substrate proteins and provides a physical environment optimized to promote and accelerate protein folding. GroES binds to the apical surface of the GroEL ring, thereby capping the opening of the GroEL channel. The chain is Co-chaperonin GroES from Leifsonia xyli subsp. xyli (strain CTCB07).